Consider the following 251-residue polypeptide: Outer membrane protein assembly factor BamD (251 aa).

Positions 1–19 (MKLTKLLSALLVIGLVLGG) are cleaved as a signal peptide. The N-palmitoyl cysteine moiety is linked to residue C20. C20 carries the S-diacylglycerol cysteine lipid modification. TPR repeat units lie at residues 33–66 (IATL…HPGN), 70–103 (PQAE…HPAN), and 166–199 (AGKE…YQTT).

The protein belongs to the BamD family. As to quaternary structure, part of the Bam complex.

The protein resides in the cell outer membrane. In terms of biological role, part of the outer membrane protein assembly complex, which is involved in assembly and insertion of beta-barrel proteins into the outer membrane. The polypeptide is Outer membrane protein assembly factor BamD (Rickettsia prowazekii (strain Madrid E)).